Here is a 620-residue protein sequence, read N- to C-terminus: Somatic embryogenesis receptor kinase 4 (620 aa).

Positions 1-33 (MTSSKMEQRSLLCFLYLLLLFNFTLRVAGNAEG) are cleaved as a signal peptide. Over 34–234 (DALTQLKNSL…GGQMTAAIAG (201 aa)) the chain is Extracellular. LRR repeat units lie at residues 100-122 (NLQYLELYSNNITGEIPEELGDL), 124-146 (ELVSLDLYANSISGPIPSSLGKL), 148-170 (KLRFLRLNNNSLSGEIPMTLTSV), 171-193 (QLQVLDISNNRLSGDIPVNGSFS), and 194-215 (LFTPISFANNSLTDLPEPPPTS). Asn110 carries N-linked (GlcNAc...) asparagine glycosylation. Asn156, Asn189, and Asn202 each carry an N-linked (GlcNAc...) asparagine glycan. The tract at residues 205-227 (LTDLPEPPPTSTSPTPPPPSGGQ) is disordered. Residues 209–224 (PEPPPTSTSPTPPPPS) show a composition bias toward pro residues. A helical membrane pass occupies residues 235 to 255 (GVAAGAALLFAVPAIAFAWWL). Residues 256 to 620 (RRKPQDHFFD…IENDYPSGPR (365 aa)) are Cytoplasmic-facing. Position 291 is a phosphothreonine (Thr291). A Protein kinase domain is found at 294–591 (FSNKNVLGRG…KEEMPIHDFN (298 aa)). At Ser295 the chain carries Phosphoserine. ATP contacts are provided by residues 300–308 (LGRGGFGKV) and Lys322. 2 positions are modified to phosphoserine: Ser375 and Ser378. Asp421 acts as the Proton acceptor in catalysis. 3 positions are modified to phosphothreonine: Thr454, Thr455, and Thr460. Tyr468 is modified (phosphotyrosine). Ser470 is subject to Phosphoserine. Thr471 carries the post-translational modification Phosphothreonine. At Ser475 the chain carries Phosphoserine. At Thr551 the chain carries Phosphothreonine.

Belongs to the protein kinase superfamily. Ser/Thr protein kinase family. In terms of assembly, interacts with the EF-Tu receptor EFR and FLS2 in a specific ligand-induced manner. Interacts with TMK4/BARK1. Interacts with ERECTA in a EPF2-induced manner. Interacts with ERL1 in a EPF1-induced manner. Interacts with TMM. Forms a complex with MIK2 in response to SCOOP12 perception. In terms of processing, autophosphorylated on Thr and Tyr residues.

Its subcellular location is the cell membrane. The catalysed reaction is L-seryl-[protein] + ATP = O-phospho-L-seryl-[protein] + ADP + H(+). It carries out the reaction L-threonyl-[protein] + ATP = O-phospho-L-threonyl-[protein] + ADP + H(+). It catalyses the reaction L-tyrosyl-[protein] + ATP = O-phospho-L-tyrosyl-[protein] + ADP + H(+). Its function is as follows. Dual specificity kinase acting on both serine/threonine- and tyrosine-containing substrates. Positively regulates the BR-dependent plant growth pathway and negatively regulates the BR-independent cell-death pathway. Required during SCOOP small peptides (e.g. SCOOP10 and SCOOP12) perception and signaling; associates with MIK2 as a coreceptor upon MIK2 perception of SCOOP peptides, and relays the signaling through the activation of receptor-like cytosolic kinases (RLCKs) BIK1 and PBL1. In Arabidopsis thaliana (Mouse-ear cress), this protein is Somatic embryogenesis receptor kinase 4.